A 397-amino-acid chain; its full sequence is Acetyl-CoA acetyltransferase, cytosolic (397 aa).

An N-acetylmethionine modification is found at M1. Catalysis depends on C92, which acts as the Acyl-thioester intermediate. Residue K200 is modified to N6-acetyllysine. CoA contacts are provided by R223 and S226. N6-acetyllysine occurs at positions 233 and 235. CoA is bound at residue S252. The Proton donor/acceptor role is filled by C383.

This sequence belongs to the thiolase-like superfamily. Thiolase family. As to quaternary structure, homotetramer.

The protein resides in the cytoplasm. It is found in the cytosol. It catalyses the reaction 2 acetyl-CoA = acetoacetyl-CoA + CoA. It functions in the pathway lipid metabolism; fatty acid metabolism. Involved in the biosynthetic pathway of cholesterol. This is Acetyl-CoA acetyltransferase, cytosolic (ACAT2) from Homo sapiens (Human).